Consider the following 173-residue polypeptide: NADH-ubiquinone oxidoreductase chain 6 (173 aa).

The next 5 membrane-spanning stretches (helical) occupy residues 1 to 21 (MTYF…AVAS), 27 to 47 (YGVV…LSLG), 48 to 68 (VSFV…VVFV), 87 to 107 (VVGY…IGGF), and 139 to 159 (CGVG…FVVL).

Belongs to the complex I subunit 6 family.

It localises to the mitochondrion membrane. It carries out the reaction a ubiquinone + NADH + 5 H(+)(in) = a ubiquinol + NAD(+) + 4 H(+)(out). In terms of biological role, core subunit of the mitochondrial membrane respiratory chain NADH dehydrogenase (Complex I) that is believed to belong to the minimal assembly required for catalysis. Complex I functions in the transfer of electrons from NADH to the respiratory chain. The immediate electron acceptor for the enzyme is believed to be ubiquinone. The chain is NADH-ubiquinone oxidoreductase chain 6 (MT-ND6) from Cepphus columba (Pigeon guillemot).